Here is a 602-residue protein sequence, read N- to C-terminus: Ligand-dependent nuclear receptor corepressor-like protein (602 aa).

The segment at 104–124 (PSLDSSQSTPTEELSSQGQSN) is disordered. Positions 106-124 (LDSSQSTPTEELSSQGQSN) are enriched in polar residues. Residues lysine 242, lysine 319, lysine 340, and lysine 397 each participate in a glycyl lysine isopeptide (Lys-Gly) (interchain with G-Cter in SUMO2) cross-link. Disordered regions lie at residues 495–521 (TVDG…KRGR) and 564–602 (ERSG…SKPV). In terms of domain architecture, HTH psq-type spans 516-568 (RKKRGRYRQYDHEIMEEAIAMVMSGKMSVSKAQGIYGVPHSTLEYKVKERSGT). Positions 544-564 (VSKAQGIYGVPHSTLEYKVKE) form a DNA-binding region, H-T-H motif. Over residues 585 to 602 (YNMTDSGTGSCKNSSKPV) the composition is skewed to polar residues.

Its subcellular location is the nucleus. Functionally, may act as transcription activator that binds DNA elements with the sequence 5'-CCCTATCGATCGATCTCTACCT-3'. May play a role in spermatogenesis. This Homo sapiens (Human) protein is Ligand-dependent nuclear receptor corepressor-like protein (LCORL).